The primary structure comprises 448 residues: Argininosuccinate synthase (448 aa).

Residues 17–25 and Ala43 each bind ATP; that span reads AFSGGLDTS. Residue Tyr99 participates in L-citrulline binding. Residues Gly129 and Thr131 each contribute to the ATP site. The L-aspartate site is built by Thr131, Asn135, and Asp136. Asn135 provides a ligand contact to L-citrulline. Residue Asp136 coordinates ATP. L-citrulline is bound by residues Arg139 and Ser192. Asp194 serves as a coordination point for ATP. Thr201, Glu203, and Glu280 together coordinate L-citrulline.

Belongs to the argininosuccinate synthase family. Type 2 subfamily. In terms of assembly, homotetramer.

It is found in the cytoplasm. The catalysed reaction is L-citrulline + L-aspartate + ATP = 2-(N(omega)-L-arginino)succinate + AMP + diphosphate + H(+). It participates in amino-acid biosynthesis; L-arginine biosynthesis; L-arginine from L-ornithine and carbamoyl phosphate: step 2/3. The sequence is that of Argininosuccinate synthase from Pectobacterium carotovorum subsp. carotovorum (strain PC1).